We begin with the raw amino-acid sequence, 564 residues long: Kelch-like protein 12 (564 aa).

Residues 29-96 (CDITLRVEGT…VYTETVLVTV (68 aa)) enclose the BTB domain. Residues 131–232 (CLGIRDFAET…LTPRYITDVI (102 aa)) enclose the BACK domain. Kelch repeat units lie at residues 278–325 (VLLV…ALND), 327–375 (VYVI…TLGD), 376–422 (MIYV…VASG), 423–469 (LIYC…LLND), 471–516 (IYVV…VLRG), and 518–563 (LYAI…VLRE).

In terms of assembly, component of the BCR(KLHL12) E3 ubiquitin ligase complex.

It localises to the cytoplasmic vesicle. Its subcellular location is the COPII-coated vesicle. It functions in the pathway protein modification; protein ubiquitination. Functionally, substrate-specific adapter of a BCR (BTB-CUL3-RBX1) E3 ubiquitin ligase complex that acts as a negative regulator of Wnt signaling pathway and ER-Golgi transport. The BCR(KLHL12) complex is involved in ER-Golgi transport by regulating the size of COPII coats, thereby playing a key role in collagen export, which is required for embryonic stem (ES) cells division. Negatively regulates the Wnt signaling pathway, possibly via the targeted ubiquitination and subsequent proteolysis of dvl2 and dvl3. Regulates convergent-extension movements during early embryonic development. This Danio rerio (Zebrafish) protein is Kelch-like protein 12 (klhl12).